A 263-amino-acid chain; its full sequence is Endonuclease 8 (263 aa).

Proline 2 functions as the Schiff-base intermediate with DNA in the catalytic mechanism. Glutamate 3 (proton donor) is an active-site residue. Lysine 53 (proton donor; for beta-elimination activity) is an active-site residue. The DNA site is built by glutamine 70, arginine 125, and asparagine 169. The segment at 229-263 (KVFHRDGEPCERCGSIIEKTTLSSRPFYWCPGCQH) adopts an FPG-type zinc-finger fold. Arginine 253 serves as the catalytic Proton donor; for delta-elimination activity.

Belongs to the FPG family. Requires Zn(2+) as cofactor.

It catalyses the reaction 2'-deoxyribonucleotide-(2'-deoxyribose 5'-phosphate)-2'-deoxyribonucleotide-DNA = a 3'-end 2'-deoxyribonucleotide-(2,3-dehydro-2,3-deoxyribose 5'-phosphate)-DNA + a 5'-end 5'-phospho-2'-deoxyribonucleoside-DNA + H(+). In terms of biological role, involved in base excision repair of DNA damaged by oxidation or by mutagenic agents. Acts as a DNA glycosylase that recognizes and removes damaged bases. Has a preference for oxidized pyrimidines, such as thymine glycol, 5,6-dihydrouracil and 5,6-dihydrothymine. Has AP (apurinic/apyrimidinic) lyase activity and introduces nicks in the DNA strand. Cleaves the DNA backbone by beta-delta elimination to generate a single-strand break at the site of the removed base with both 3'- and 5'-phosphates. The protein is Endonuclease 8 of Escherichia coli O17:K52:H18 (strain UMN026 / ExPEC).